The sequence spans 322 residues: Ribonuclease Z (322 aa).

Zn(2+) is bound by residues histidine 60, histidine 62, aspartate 64, histidine 65, histidine 140, aspartate 210, and histidine 270. Residue aspartate 64 is the Proton acceptor of the active site.

This sequence belongs to the RNase Z family. As to quaternary structure, homodimer. Zn(2+) serves as cofactor.

It catalyses the reaction Endonucleolytic cleavage of RNA, removing extra 3' nucleotides from tRNA precursor, generating 3' termini of tRNAs. A 3'-hydroxy group is left at the tRNA terminus and a 5'-phosphoryl group is left at the trailer molecule.. In terms of biological role, zinc phosphodiesterase, which displays some tRNA 3'-processing endonuclease activity. Probably involved in tRNA maturation, by removing a 3'-trailer from precursor tRNA. The protein is Ribonuclease Z of Methanococcus aeolicus (strain ATCC BAA-1280 / DSM 17508 / OCM 812 / Nankai-3).